The primary structure comprises 317 residues: uncharacterized protein (317 aa).

Residues 29–86 form the HTH lysR-type domain; it reads IDLNLLTIFEAVYVHKGIVNAAKVLNLTPSAISQSIQKLRVIFPDPLFIRKGQGVTPT. A DNA-binding region (H-T-H motif) is located at residues 46–65; that stretch reads IVNAAKVLNLTPSAISQSIQ.

Belongs to the LysR transcriptional regulatory family.

This is an uncharacterized protein from Escherichia coli (strain K12).